Here is a 224-residue protein sequence, read N- to C-terminus: Transcriptional regulatory protein CiaR (224 aa).

The Response regulatory domain maps to 3-116; that stretch reads KILLVEDDLG…ELKMRIQALL (114 aa). Residue D51 is modified to 4-aspartylphosphate. The ompR/PhoB-type DNA-binding region spans 124–222; that stretch reads ENTLTYGNIV…LRSVGYLLKD (99 aa).

Phosphorylated by CiaH.

It localises to the cytoplasm. In terms of biological role, member of the two-component regulatory system CiaH/CiaR. Involved in early steps of competence regulation and in penicillin susceptibility. This is Transcriptional regulatory protein CiaR (ciaR) from Streptococcus pneumoniae (strain ATCC BAA-255 / R6).